The sequence spans 513 residues: Xylose import ATP-binding protein XylG (513 aa).

2 ABC transporter domains span residues 5 to 242 (LEMK…VGRE) and 259 to 505 (LRVE…LRSE). 37–44 (GENGSGKS) provides a ligand contact to ATP.

It belongs to the ABC transporter superfamily. Xylose importer (TC 3.A.1.2.4) family. As to quaternary structure, the complex is composed of two ATP-binding proteins (XylG), two transmembrane proteins (XylH) and a solute-binding protein (XylF).

Its subcellular location is the cell inner membrane. It carries out the reaction D-xylose(out) + ATP + H2O = D-xylose(in) + ADP + phosphate + H(+). Part of the ABC transporter complex XylFGH involved in xylose import. Responsible for energy coupling to the transport system. This is Xylose import ATP-binding protein XylG from Pectobacterium atrosepticum (strain SCRI 1043 / ATCC BAA-672) (Erwinia carotovora subsp. atroseptica).